The following is a 668-amino-acid chain: Macrolide export ATP-binding/permease protein MacB 1/2 (668 aa).

Residues 9-247 (IRLRGVGREY…PGPGPAQAPQ (239 aa)) enclose the ABC transporter domain. An ATP-binding site is contributed by 45–52 (GASGSGKS). Residues 230-257 (RTGAPAADPGPGPAQAPQPAPQPAPVQA) form a disordered region. The segment covering 237–255 (DPGPGPAQAPQPAPQPAPV) has biased composition (pro residues). Helical transmembrane passes span 294-314 (FLTM…VALG), 541-561 (LALL…IGVM), 598-618 (LVCV…GLAF), and 634-654 (MLAA…LPAV).

The protein belongs to the ABC transporter superfamily. Macrolide exporter (TC 3.A.1.122) family. In terms of assembly, homodimer.

It localises to the cell inner membrane. In terms of biological role, non-canonical ABC transporter that contains transmembrane domains (TMD), which form a pore in the inner membrane, and an ATP-binding domain (NBD), which is responsible for energy generation. Confers resistance against macrolides. This is Macrolide export ATP-binding/permease protein MacB 1/2 from Paracoccus denitrificans (strain Pd 1222).